Reading from the N-terminus, the 489-residue chain is Betaine aldehyde dehydrogenase (489 aa).

Thr26 and Asp93 together coordinate K(+). Residue 150–152 (GAW) coordinates NAD(+). Lys162 acts as the Charge relay system in catalysis. NAD(+) is bound at residue 176–179 (KPSE). A K(+)-binding site is contributed by Ile180. NAD(+) is bound at residue 229 to 232 (GVET). Leu245 is a binding site for K(+). Glu251 serves as the catalytic Proton acceptor. 3 residues coordinate NAD(+): Gly253, Cys285, and Glu386. The Nucleophile role is filled by Cys285. Position 285 is a cysteine sulfenic acid (-SOH) (Cys285). Positions 456 and 459 each coordinate K(+). Glu463 acts as the Charge relay system in catalysis.

This sequence belongs to the aldehyde dehydrogenase family. Dimer of dimers. The cofactor is K(+).

The catalysed reaction is betaine aldehyde + NAD(+) + H2O = glycine betaine + NADH + 2 H(+). The protein operates within amine and polyamine biosynthesis; betaine biosynthesis via choline pathway; betaine from betaine aldehyde: step 1/1. Involved in the biosynthesis of the osmoprotectant glycine betaine. Catalyzes the irreversible oxidation of betaine aldehyde to the corresponding acid. The protein is Betaine aldehyde dehydrogenase of Paraburkholderia xenovorans (strain LB400).